The following is a 309-amino-acid chain: Ribosomal RNA small subunit methyltransferase H (309 aa).

Residues 39–41 (GGH), D59, F83, D100, and Q107 contribute to the S-adenosyl-L-methionine site.

Belongs to the methyltransferase superfamily. RsmH family.

The protein localises to the cytoplasm. It carries out the reaction cytidine(1402) in 16S rRNA + S-adenosyl-L-methionine = N(4)-methylcytidine(1402) in 16S rRNA + S-adenosyl-L-homocysteine + H(+). Specifically methylates the N4 position of cytidine in position 1402 (C1402) of 16S rRNA. In Delftia acidovorans (strain DSM 14801 / SPH-1), this protein is Ribosomal RNA small subunit methyltransferase H.